The primary structure comprises 509 residues: Bestrophin-2a (509 aa).

Topologically, residues 1 to 31 (MTVTYTARVANARFGGFSQLLLLWRGSIYKL) are cytoplasmic. Alanine 10 contacts Ca(2+). Residues 32–51 (LWRELLCFLGFYMALSAAYR) form a helical membrane-spanning segment. The Extracellular portion of the chain corresponds to 52–60 (FVLTEGQKR). Residues 61–82 (YFEKLVIYCDQYASLIPVSFVL) form a helical membrane-spanning segment. At 83–238 (GFYVTLVVNR…WISVPLVYTQ (156 aa)) the chain is on the cytoplasmic side. Residues 239–255 (VVTIALYSYFLACLIGR) form a helical membrane-spanning segment. Over 256–274 (QFLDPAQGYKDHDLDLCVP) the chain is Extracellular. Residues 275 to 288 (IFTLLQFFFYAGWL) traverse the membrane as a helical segment. Over 289-509 (KVAEQLINPF…PIGEEEENLA (221 aa)) the chain is Cytoplasmic. Ca(2+) is bound by residues glutamine 293, asparagine 296, aspartate 301, and aspartate 304. The interval 454-509 (DPGLPEPEAPPPAGPEPLTLIPGPVEPFSIVTMPGPRGPAPPWLPSPIGEEEENLA) is disordered. Pro residues-rich tracts occupy residues 457–468 (LPEPEAPPPAGP) and 489–498 (PRGPAPPWLP).

This sequence belongs to the anion channel-forming bestrophin (TC 1.A.46) family. Calcium-sensitive chloride channel subfamily. Pentamer. Interacts with GLUL; this interaction tethers a fraction of GLUL to the membrane, causing a decrease of cytosolic glutamine synthase (GS) activity and inhibits the chloride channel activity of BEST2 by affecting the gating at the aperture in the absence of intracellular glutamate. As to expression, mainly confined to the retinal pigment epithelium. Expressed in colon.

The protein localises to the cell membrane. The protein resides in the basolateral cell membrane. The catalysed reaction is chloride(in) = chloride(out). It carries out the reaction hydrogencarbonate(in) = hydrogencarbonate(out). It catalyses the reaction L-glutamate(out) = L-glutamate(in). The enzyme catalyses iodide(out) = iodide(in). The catalysed reaction is L-glutamine(out) = L-glutamine(in). With respect to regulation, chloride channel activity is allosterically inhibited by GLUL/glutamine synthase (GS) which affects the gating at the aperture in the absence of intracellular glutamate. Inhibitory effect of GLUL is relieved upon increasing of L-glutamate intracellular level. Functionally, ligand-gated anion channel that allows the movement of anions across cell membranes when activated by calcium (Ca2+). Transports a large specter of anions, namely mediates the movement of chloride, L-glutamate and iodide. Calcium-binding triggers the dilation of the aperture, but calcium-dependent gating is only effective when the size of the passing anion is bigger than the closed aperture. Mediates the calcium-activated hydrogencarbonate movement and participates in colonic hydrogencarbonate secretion concomitant with mucin secretion. In non-pigmented epithelium (NPE), mediates the efflux of intracellular L-glutamate; binding of intracellular L-glutamate activates and open both the neck and the aperture of the channel, leading to L-glutamate exit promoting chloride influx movement from the extracellular side in trans. Also exhibits a directional permeability for intracellular glutamine, in a similar manner as for L-glutamate. The sequence is that of Bestrophin-2a from Homo sapiens (Human).